The sequence spans 805 residues: Serine/threonine-protein kinase fused (805 aa).

One can recognise a Protein kinase domain in the interval 4 to 254 (YAVSSLVGQG…WTQLLCHPFV (251 aa)). Residues 10-18 (VGQGSFGCV) and lysine 33 contribute to the ATP site. Aspartate 125 serves as the catalytic Proton acceptor. The interval 269–289 (KESPFTNPEAKVKSSKQSDPE) is disordered. Positions 278-287 (AKVKSSKQSD) are enriched in basic and acidic residues. Residues serine 422 and serine 429 each carry the phosphoserine modification. Over residues 447 to 456 (IATQEKHNQE) the composition is skewed to basic and acidic residues. Residues 447-496 (IATQEKHNQENKPPAEAISYANSQPPQQQPQQLKHSMHSTNEEKLSSDNT) are disordered.

This sequence belongs to the protein kinase superfamily. Ser/Thr protein kinase family. As to expression, expressed in all imaginal disks, higher level in wing disk.

The enzyme catalyses L-seryl-[protein] + ATP = O-phospho-L-seryl-[protein] + ADP + H(+). It catalyses the reaction L-threonyl-[protein] + ATP = O-phospho-L-threonyl-[protein] + ADP + H(+). Its function is as follows. Probable serine/threonine-protein kinase; maternally required for correct patterning in the posterior part of each embryonic metamere. May be involved in control of cell division during metamorphosis and ovarian development. May interact with costal-2. The protein is Serine/threonine-protein kinase fused (fu) of Drosophila melanogaster (Fruit fly).